A 364-amino-acid chain; its full sequence is tRNA 2-selenouridine synthase (364 aa).

The region spanning L14–I137 is the Rhodanese domain. C97 acts as the S-selanylcysteine intermediate in catalysis.

Belongs to the SelU family. As to quaternary structure, monomer.

It carries out the reaction 5-methylaminomethyl-2-thiouridine(34) in tRNA + selenophosphate + (2E)-geranyl diphosphate + H2O + H(+) = 5-methylaminomethyl-2-selenouridine(34) in tRNA + (2E)-thiogeraniol + phosphate + diphosphate. The enzyme catalyses 5-methylaminomethyl-2-thiouridine(34) in tRNA + (2E)-geranyl diphosphate = 5-methylaminomethyl-S-(2E)-geranyl-thiouridine(34) in tRNA + diphosphate. The catalysed reaction is 5-methylaminomethyl-S-(2E)-geranyl-thiouridine(34) in tRNA + selenophosphate + H(+) = 5-methylaminomethyl-2-(Se-phospho)selenouridine(34) in tRNA + (2E)-thiogeraniol. It catalyses the reaction 5-methylaminomethyl-2-(Se-phospho)selenouridine(34) in tRNA + H2O = 5-methylaminomethyl-2-selenouridine(34) in tRNA + phosphate. Its function is as follows. Involved in the post-transcriptional modification of the uridine at the wobble position (U34) of tRNA(Lys), tRNA(Glu) and tRNA(Gln). Catalyzes the conversion of 2-thiouridine (S2U-RNA) to 2-selenouridine (Se2U-RNA). Acts in a two-step process involving geranylation of 2-thiouridine (S2U) to S-geranyl-2-thiouridine (geS2U) and subsequent selenation of the latter derivative to 2-selenouridine (Se2U) in the tRNA chain. This chain is tRNA 2-selenouridine synthase, found in Escherichia coli (strain SMS-3-5 / SECEC).